The sequence spans 638 residues: Terrein cluster-specific transcription factor terR (638 aa).

The segment at residues 50 to 76 (CDMCKSKKVRCDGGTPCSYCNLHDLRC) is a DNA-binding region (zn(2)-C6 fungal-type).

It is found in the nucleus. Its function is as follows. Transcription factor that regulates specifically the terrein biosynthesis gene cluster. Recognizes CGG direct repeat consensus sequences in the terrein cluster forming the high affinity consensus motif TCGGHHWYHCGGH. The polypeptide is Terrein cluster-specific transcription factor terR (Aspergillus terreus (strain NIH 2624 / FGSC A1156)).